A 265-amino-acid chain; its full sequence is tRNA pseudouridine synthase A (265 aa).

D52 functions as the Nucleophile in the catalytic mechanism. Y105 is a binding site for substrate.

It belongs to the tRNA pseudouridine synthase TruA family.

The catalysed reaction is uridine(38/39/40) in tRNA = pseudouridine(38/39/40) in tRNA. Formation of pseudouridine at positions 38, 39 and 40 in the anticodon stem and loop of transfer RNAs. This is tRNA pseudouridine synthase A from Archaeoglobus fulgidus (strain ATCC 49558 / DSM 4304 / JCM 9628 / NBRC 100126 / VC-16).